We begin with the raw amino-acid sequence, 295 residues long: Beta-chimaerin (295 aa).

The Phorbol-ester/DAG-type zinc finger occupies 41–91; sequence THNFKVHTFRGPHWCEYCANFMWGLIAQGVRCSDCGLNVHKQCSKHVPNDC. In terms of domain architecture, Rho-GAP spans 104 to 295; sequence CDLTTLVKAH…ILIENEDVLF (192 aa).

As to expression, found in cerebellum and testis.

It localises to the membrane. In the inactive state, the N terminus protrudes into the active site of the Rho-GAP domain, sterically blocking Rac binding. Phospholipid binding to the Phorbol-ester/DAG-type zinc-finger/C1 domain triggers the cooperative dissociation of these interactions, allowing the N-terminus to move out of the active site and thereby activating the enzyme. In terms of biological role, GTPase-activating protein for p21-rac. The sequence is that of Beta-chimaerin (Chn2) from Rattus norvegicus (Rat).